The primary structure comprises 218 residues: Synaptonemal complex central element protein 2 (218 aa).

Basic and acidic residues predominate over residues Met1–Glu32. The interval Met1 to Pro42 is disordered. The stretch at Ser61 to Lys87 forms a coiled coil. The interval Arg171–Cys218 is disordered. Over residues Val198 to Gln211 the composition is skewed to polar residues.

It belongs to the SYCE family. Homodimer. Found in a complex with SYCP1 and SYCE1. Interacts with SYCP1, SYCE1 and SYCE3. Interacts with TEX12.

Its subcellular location is the nucleus. It is found in the chromosome. Functionally, major component of the transverse central element of synaptonemal complexes (SCS), formed between homologous chromosomes during meiotic prophase. Requires SYCP1 in order to be incorporated into the central element. May have a role in the synaptonemal complex assembly, stabilization and recombination. This is Synaptonemal complex central element protein 2 (SYCE2) from Homo sapiens (Human).